A 98-amino-acid polypeptide reads, in one-letter code: PqqA binding protein (98 aa).

It belongs to the PqqD family. Monomer. Interacts with PqqE.

The protein operates within cofactor biosynthesis; pyrroloquinoline quinone biosynthesis. Functions as a PqqA binding protein and presents PqqA to PqqE, in the pyrroloquinoline quinone (PQQ) biosynthetic pathway. The polypeptide is PqqA binding protein (Rhizobium meliloti (strain 1021) (Ensifer meliloti)).